Reading from the N-terminus, the 94-residue chain is Small ribosomal subunit protein bS18 (94 aa).

It belongs to the bacterial ribosomal protein bS18 family. In terms of assembly, part of the 30S ribosomal subunit. Forms a tight heterodimer with protein bS6.

Its function is as follows. Binds as a heterodimer with protein bS6 to the central domain of the 16S rRNA, where it helps stabilize the platform of the 30S subunit. In Leptothrix cholodnii (strain ATCC 51168 / LMG 8142 / SP-6) (Leptothrix discophora (strain SP-6)), this protein is Small ribosomal subunit protein bS18.